Reading from the N-terminus, the 66-residue chain is Large ribosomal subunit protein bL35 (66 aa).

Basic residues predominate over residues 1 to 16 (MPKQKTHRASAKRFKR). The interval 1 to 22 (MPKQKTHRASAKRFKRTGSGGL) is disordered.

Belongs to the bacterial ribosomal protein bL35 family.

In Streptococcus suis (strain 05ZYH33), this protein is Large ribosomal subunit protein bL35.